The following is a 438-amino-acid chain: Chromosomal replication initiator protein DnaA (438 aa).

The tract at residues 1-74 is domain I, interacts with DnaA modulators; it reads MNEINKIWQK…SFYQITGSQV (74 aa). The domain II stretch occupies residues 74–100; sequence VEVKYIITGKEHETGLIEEKKQVIKKG. Residues 101–317 form a domain III, AAA+ region region; that stretch reads NLNPKYTFDT…GSLIKLCAYT (217 aa). ATP is bound by residues glycine 145, glycine 147, lysine 148, and threonine 149. Residues 318–438 form a domain IV, binds dsDNA region; sequence SLTKVPISMD…DSIIKKVTGQ (121 aa).

The protein belongs to the DnaA family. Oligomerizes as a right-handed, spiral filament on DNA at oriC.

The protein localises to the cytoplasm. Plays an essential role in the initiation and regulation of chromosomal replication. ATP-DnaA binds to the origin of replication (oriC) to initiate formation of the DNA replication initiation complex once per cell cycle. Binds the DnaA box (a 9 base pair repeat at the origin) and separates the double-stranded (ds)DNA. Forms a right-handed helical filament on oriC DNA; dsDNA binds to the exterior of the filament while single-stranded (ss)DNA is stabiized in the filament's interior. The ATP-DnaA-oriC complex binds and stabilizes one strand of the AT-rich DNA unwinding element (DUE), permitting loading of DNA polymerase. After initiation quickly degrades to an ADP-DnaA complex that is not apt for DNA replication. Binds acidic phospholipids. This Thermodesulfovibrio yellowstonii (strain ATCC 51303 / DSM 11347 / YP87) protein is Chromosomal replication initiator protein DnaA.